The primary structure comprises 361 residues: Peptide chain release factor 1 (361 aa).

The residue at position 235 (Gln235) is an N5-methylglutamine.

Belongs to the prokaryotic/mitochondrial release factor family. Methylated by PrmC. Methylation increases the termination efficiency of RF1.

Its subcellular location is the cytoplasm. Its function is as follows. Peptide chain release factor 1 directs the termination of translation in response to the peptide chain termination codons UAG and UAA. This chain is Peptide chain release factor 1, found in Rhodopseudomonas palustris (strain BisB18).